A 554-amino-acid chain; its full sequence is Terpene synthase 17 (554 aa).

3 residues coordinate Mg(2+): aspartate 306, aspartate 310, and glutamate 458. The short motif at 306-310 (DDTYD) is the DDXXD motif element.

It belongs to the terpene synthase family. Tpsa subfamily. It depends on Mg(2+) as a cofactor. Requires Mn(2+) as cofactor. Mostly expressed in stem and trichomes, to a lower extent in leaves, flowers and roots and, at low levels, in fruits.

It catalyses the reaction (2Z,6Z)-farnesyl diphosphate = beta-bisabolene + diphosphate. The enzyme catalyses (2E,6E)-farnesyl diphosphate = (+)-valencene + diphosphate. The catalysed reaction is (2E,6E)-farnesyl diphosphate = (E)-beta-farnesene + diphosphate. It carries out the reaction (2E,6E)-farnesyl diphosphate = gamma-gurjunene + diphosphate. It catalyses the reaction (2Z,6Z)-farnesyl diphosphate = (E)-gamma-bisabolene + diphosphate. The enzyme catalyses (2E)-geranyl diphosphate = limonene + diphosphate. The catalysed reaction is (2E)-geranyl diphosphate = beta-myrcene + diphosphate. It carries out the reaction (2E)-geranyl diphosphate = (E)-beta-ocimene + diphosphate. It catalyses the reaction (2E)-geranyl diphosphate = terpinolene + diphosphate. The enzyme catalyses (2E)-geranyl diphosphate = gamma-terpinene + diphosphate. The catalysed reaction is (2Z,6Z)-farnesyl diphosphate = (Z)-gamma-bisabolene + diphosphate. It carries out the reaction (2E,6E)-farnesyl diphosphate = (1S,5S,6R)-alpha-bergamotene + diphosphate. It catalyses the reaction (2Z,6Z)-farnesyl diphosphate = (1S,5S,6S)-alpha-bergamotene + diphosphate. It participates in secondary metabolite biosynthesis; terpenoid biosynthesis. Its function is as follows. Sesquiterpene synthase involved in the biosynthesis of volatile compounds. Mediates the conversion of (2E,6E)-farnesyl diphosphate (FPP) into gamma-gurjunene, (E)-beta-farnesene and (+)-valencene, and of (2Z,6Z)-farnesyl diphosphate ((ZZ)-FPP) into (E)-alpha-bergamotene and (Z)-gamma-bisabolene as well as beta-bisabolene, (Z)-alpha-bergamotene and (E)-gamma-bisabolene to a lower extent. Can act with a low efficiency as a monoterpene synthase with geranyl diphosphate (GPP) as substrate, thus producing beta-myrcene, (E)-beta-ocimene, limonene, terpinolene, gamma-terpinene and (Z)-beta-ocimene. The protein is Terpene synthase 17 of Solanum lycopersicum (Tomato).